Consider the following 367-residue polypeptide: Endopolygalacturonase B (367 aa).

A signal peptide spans 1-17; the sequence is MHFQLLGLAALGSLAAA. Residues 18-30 constitute a propeptide that is removed on maturation; that stretch reads APAPSRTSELVER. Cysteine 34 and cysteine 49 form a disulfide bridge. PbH1 repeat units lie at residues 161–191, 192–213, 214–234, 243–264, and 272–294; these read GNDVHLTDITIDNSDGDNNGGHNTDAFDVSE, SNGVYITGANVKNQDDCLAINS, GENIEFTGATCSGGHGISIGS, VKNVKVADSTVVDSDNGIRIKT, and VSGVTYENITLKNIKKNGIVIEQ. Residue aspartate 206 is the Proton donor of the active site. The cysteines at positions 208 and 224 are disulfide-linked. Histidine 228 is an active-site residue. Asparagine 279 is a glycosylation site (N-linked (GlcNAc...) asparagine). Cystine bridges form between cysteine 334-cysteine 339 and cysteine 358-cysteine 367.

It belongs to the glycosyl hydrolase 28 family.

Its subcellular location is the secreted. It carries out the reaction (1,4-alpha-D-galacturonosyl)n+m + H2O = (1,4-alpha-D-galacturonosyl)n + (1,4-alpha-D-galacturonosyl)m.. In terms of biological role, involved in maceration and soft-rotting of plant tissue. Hydrolyzes the 1,4-alpha glycosidic bonds of de-esterified pectate in the smooth region of the plant cell wall. This chain is Endopolygalacturonase B (pgaB), found in Aspergillus flavus (strain ATCC MYA-384 / AF70).